Consider the following 94-residue polypeptide: Elongation factor 1-beta (94 aa).

Belongs to the EF-1-beta/EF-1-delta family.

Its function is as follows. Promotes the exchange of GDP for GTP in EF-1-alpha/GDP, thus allowing the regeneration of EF-1-alpha/GTP that could then be used to form the ternary complex EF-1-alpha/GTP/AAtRNA. In Ignicoccus hospitalis (strain KIN4/I / DSM 18386 / JCM 14125), this protein is Elongation factor 1-beta.